We begin with the raw amino-acid sequence, 959 residues long: DEAD-box ATP-dependent RNA helicase rde-12 (959 aa).

The disordered stretch occupies residues 1–336 (MSSFGNNAGG…EGVNAPVRAP (336 aa)). Basic and acidic residues predominate over residues 71–97 (GRREDDRSHSRDNHGGSRYGERDDRGN). Positions 98–118 (NGRSADNRYSQSNYNYDSNRG) are enriched in polar residues. Residues 122–134 (YQRDNHGSKDDRG) show a composition bias toward basic and acidic residues. The span at 137-160 (NQYNDHGSNHNSNSRNDQYRQGSY) shows a compositional bias: polar residues. 2 stretches are compositionally biased toward basic and acidic residues: residues 166–181 (SGYRRDDDRRRNDNDQ) and 189–201 (RDSDRNSPRDHHN). A compositionally biased stretch (polar residues) spans 202–213 (YNSQSSPRSHQG). Basic and acidic residues-rich tracts occupy residues 219-239 (SAPKEDNQRRYDNHQGGHDSY) and 255-270 (YRNDYRSQQDSRDHRS). Residues 271 to 280 (GGNNSSSGFK) show a composition bias toward low complexity. Over residues 281 to 301 (NDGGFGGNDNRGFGNNGGGSF) the composition is skewed to gly residues. Over residues 302–317 (GNPNNSYRGNSNNIGG) the composition is skewed to low complexity. Residues 380-408 (TSWTNSGLHPTILETLKRIKYNNVRTIQG) carry the Q motif motif. In terms of domain architecture, Helicase ATP-binding spans 411–599 (IPQVLDGHDV…NELMKRLPGQ (189 aa)). 424 to 431 (AETSAGKT) contacts ATP. Residues 539-542 (DEAD) carry the DEAD box motif. The 161-residue stretch at 632–792 (KLREILKQNV…KVPDFLDAMA (161 aa)) folds into the Helicase C-terminal domain. Disordered regions lie at residues 793 to 834 (KSSR…GGGR) and 858 to 959 (GGGG…DDEW). 2 stretches are compositionally biased toward gly residues: residues 800–834 (GTSGFGQRGGYGGRGGGFGGTGRGRGGGVFGGGGR) and 858–872 (GGGGFGGVKPSGFGG). Residues 930–941 (TLGSSTFGTANN) are compositionally biased toward polar residues. Over residues 942-959 (ADEEPTETGADGNDDDEW) the composition is skewed to acidic residues.

It belongs to the DEAD box helicase family. DDX3/DED1 subfamily. Interacts with wago-1, ergo-1 and rde-1. It depends on Mg(2+) as a cofactor. In terms of tissue distribution, expressed in the soma and germline.

Its subcellular location is the cytoplasm. The protein resides in the perinuclear region. The protein localises to the cytoplasmic granule. It is found in the P-body. It catalyses the reaction ATP + H2O = ADP + phosphate + H(+). Its function is as follows. Probable ATP-dependent RNA helicase involved in RNAi-mediated gene silencing. Specifically required in the endogenous siRNA pathway for biogenesis of secondary endogenous small interfering RNA (siRNA) intermediates called 22G-RNAs. May associate with and recruit rde-10 to primary siRNA-targeted mRNA for secondary siRNA synthesis. May be recruited to target mRNAs by rde-1 and/or ergo-1. The sequence is that of DEAD-box ATP-dependent RNA helicase rde-12 from Caenorhabditis elegans.